The primary structure comprises 500 residues: L-arabinose isomerase (500 aa).

Mn(2+)-binding residues include E306, E333, H350, and H450.

The protein belongs to the arabinose isomerase family. In terms of assembly, homohexamer. Mn(2+) is required as a cofactor.

It catalyses the reaction beta-L-arabinopyranose = L-ribulose. The protein operates within carbohydrate degradation; L-arabinose degradation via L-ribulose; D-xylulose 5-phosphate from L-arabinose (bacterial route): step 1/3. Functionally, catalyzes the conversion of L-arabinose to L-ribulose. The chain is L-arabinose isomerase from Salmonella newport (strain SL254).